The following is a 456-amino-acid chain: NADPH-ferredoxin reductase FprA (456 aa).

Positions 17, 43, 51, and 87 each coordinate FAD. NADP(+) is bound by residues Arg-113, 158-161 (NGNV), 202-203 (RR), and Glu-214. Residues Trp-362 and 369–371 (GVI) each bind FAD. Gly-369 serves as a coordination point for NADP(+).

The protein belongs to the ferredoxin--NADP reductase type 1 family. As to quaternary structure, monomer. FAD is required as a cofactor.

The enzyme catalyses 2 reduced [2Fe-2S]-[ferredoxin] + NADP(+) + H(+) = 2 oxidized [2Fe-2S]-[ferredoxin] + NADPH. In terms of biological role, may serve as electron transfer protein and supply electrons to P450 systems. This is NADPH-ferredoxin reductase FprA (fprA) from Mycobacterium leprae (strain TN).